Here is a 686-residue protein sequence, read N- to C-terminus: Disintegrin and metalloproteinase domain-containing protein 17 homolog (686 aa).

An N-terminal signal peptide occupies residues 1–21; sequence MKIQDRSLLIFLVLGILKSDA. A propeptide spanning residues 22-177 is cleaved from the precursor; that stretch reads FNTRVKRHAP…RRAIAIPSDR (156 aa). N-linked (GlcNAc...) asparagine glycosylation is found at asparagine 59, asparagine 206, and asparagine 262. At 178–637 the chain is on the extracellular side; it reads RKDVLNVKRN…TGGVLEFIKT (460 aa). The region spanning 187–445 is the Peptidase M12B domain; the sequence is NRCTLKLVAD…KWESCFQEEM (259 aa). Intrachain disulfides connect cysteine 328–cysteine 440 and cysteine 394–cysteine 424. Position 370 (histidine 370) interacts with Zn(2+). Glutamate 371 is a catalytic residue. Zn(2+) is bound by residues histidine 374 and histidine 380. Residues 446 to 535 form the Disintegrin domain; the sequence is TSFCGNGIVE…ECPSAPPVRD (90 aa). N-linked (GlcNAc...) asparagine glycosylation is present at asparagine 501. A disulfide bridge connects residues cysteine 506 and cysteine 527. An N-linked (GlcNAc...) asparagine glycan is attached at asparagine 581. The helical transmembrane segment at 638-658 threads the bilayer; sequence HIVVIAIIFFTLIFVGIYKIV. The Cytoplasmic segment spans residues 659 to 686; sequence KYGENFTEKVTHKTAGGCRSVFVKADVN.

Zn(2+) is required as a cofactor.

It localises to the cell membrane. Its function is as follows. Metalloprotease. Acts together with protease sup-17 to facilitate lin-12/Notch signaling during developmental cell fate decision, including anchor cell/ventral uterine precursor cell decision. By modulating glp-1/Notch signaling, plays a role in germline development. This chain is Disintegrin and metalloproteinase domain-containing protein 17 homolog, found in Caenorhabditis elegans.